The following is a 333-amino-acid chain: Taste receptor type 2 member 38 (333 aa).

Residues 1 to 17 (MLTLTHICTVSYEVRST) are Extracellular-facing. Residues 18–38 (FLFISVLEFAVGFLTNAFISL) traverse the membrane as a helical segment. The Cytoplasmic portion of the chain corresponds to 39 to 55 (VNFWDVVKRQPLSNSDC). Residues 56–76 (VLLCLSISRLFLHGLLFLSAI) form a helical membrane-spanning segment. Topologically, residues 77–94 (QLTHFQKLSEPLNHSYQV) are extracellular. A helical membrane pass occupies residues 95–115 (ILMLWMIANQANLWLAACLSL). Residues 116–142 (LYCSKLIRFSHTFLICLASWVSRKISQ) lie on the Cytoplasmic side of the membrane. The chain crosses the membrane as a helical span at residues 143–163 (MLLGIILCSCICTVLCVWCFF). Topologically, residues 164-190 (GRLHFTVTTVLFMNNNTRLNWQIKDLN) are extracellular. N-linked (GlcNAc...) asparagine glycosylation occurs at Asn-178. The helical transmembrane segment at 191 to 211 (LFYSFLFCYLWSVPPFLLFLV) threads the bilayer. At 212-251 (SSGMLTVSLGRHMRTMKVYTRDSRDPSLEAHIKALKSLVS) the chain is on the cytoplasmic side. A helical transmembrane segment spans residues 252–272 (FFCFFVISSCAAFISVPLLIL). Topologically, residues 273-276 (WHDK) are extracellular. A helical membrane pass occupies residues 277–297 (IGVMVCVGIMAACPSGHAAVL). Over 298 to 333 (ISGNAKLRRAVTTILLWAQSSLKVRADHMADSRTLC) the chain is Cytoplasmic.

It belongs to the G-protein coupled receptor T2R family.

It localises to the membrane. In terms of biological role, receptor that may play a role in the perception of bitterness and is gustducin-linked. May play a role in sensing the chemical composition of the gastrointestinal content. The activity of this receptor may stimulate alpha gustducin, mediate PLC-beta-2 activation and lead to the gating of TRPM5. This Papio hamadryas (Hamadryas baboon) protein is Taste receptor type 2 member 38 (TAS2R38).